Reading from the N-terminus, the 122-residue chain is Basic phospholipase A2 LmTX-I (122 aa).

Intrachain disulfides connect cysteine 26–cysteine 115, cysteine 28–cysteine 44, cysteine 43–cysteine 95, cysteine 49–cysteine 122, cysteine 50–cysteine 88, and cysteine 75–cysteine 86. Positions 27, 29, and 31 each coordinate Ca(2+). Histidine 47 is a catalytic residue. Aspartate 48 contacts Ca(2+). The active site involves aspartate 89.

As to quaternary structure, monomer. The cofactor is Ca(2+). Expressed by the venom gland.

The protein localises to the secreted. The catalysed reaction is a 1,2-diacyl-sn-glycero-3-phosphocholine + H2O = a 1-acyl-sn-glycero-3-phosphocholine + a fatty acid + H(+). Its activity is regulated as follows. Inhibited by Mn(2+), Mg(2+), Zn(2+) and Cu(2+). In terms of biological role, snake venom phospholipase A2 (PLA2) that displays neurotoxic and myotoxic activities. Induces inflammatory edema by mechanisms involving mast cell activation and arachidonic acid metabolites. Increases plasma creatine kinase activity. PLA2 catalyzes the calcium-dependent hydrolysis of the 2-acyl groups in 3-sn-phosphoglycerides. The chain is Basic phospholipase A2 LmTX-I from Lachesis muta muta (Bushmaster).